The following is a 212-amino-acid chain: Protein Rv0786c (212 aa).

The sequence is that of Protein Rv0786c from Mycobacterium tuberculosis (strain ATCC 25618 / H37Rv).